Here is a 77-residue protein sequence, read N- to C-terminus: Pollen allergen Amb p 5a (77 aa).

A signal peptide spans 1–22; the sequence is MNNEKNVSFEFIGSTDEVDEIK. 4 disulfide bridges follow: Cys-26–Cys-61, Cys-33–Cys-48, Cys-40–Cys-54, and Cys-41–Cys-65.

The sequence is that of Pollen allergen Amb p 5a from Ambrosia psilostachya (Western ragweed).